The primary structure comprises 67 residues: DNA gyrase inhibitor YacG (67 aa).

Zn(2+) is bound by residues cysteine 8, cysteine 11, cysteine 27, and cysteine 31.

Belongs to the DNA gyrase inhibitor YacG family. In terms of assembly, interacts with GyrB. It depends on Zn(2+) as a cofactor.

Its function is as follows. Inhibits all the catalytic activities of DNA gyrase by preventing its interaction with DNA. Acts by binding directly to the C-terminal domain of GyrB, which probably disrupts DNA binding by the gyrase. This is DNA gyrase inhibitor YacG from Ralstonia pickettii (strain 12J).